Consider the following 628-residue polypeptide: Serine/threonine-protein phosphatase 2A regulatory subunit psrA (628 aa).

Over residues 1-22 (MKNDHINYQQNLSQSPILNSNK) the composition is skewed to polar residues. 3 disordered regions span residues 1-61 (MKND…QIPF), 500-558 (KKKQ…DKPS), and 577-628 (SSHR…YTFT). Low complexity-rich tracts occupy residues 23–58 (NQTQQNQQQQQQQQQQNPQQQQQFQHQQVPQLSPQQ) and 524–547 (QINQNNNNNNNNINNNNNNNNNNN). Basic and acidic residues predominate over residues 600 to 618 (NNHTNHDSEIENEVKEDFR).

Belongs to the phosphatase 2A regulatory subunit B56 family. PP2A consists of a trimeric holoenzyme, composed of a 37 kDa catalytic subunit (C subunit) and a 65 kDa constant regulatory subunit (A subunit), that associates with a variety of regulatory subunits (B subunit) such as phr2AB (B55) and psrA (B56 homolog). The trimer may partially dissociates into a core 'AC' dimer equally active compared to the trimer. Seems to play a role in proper anterior patterning (pstO and pstAB).

It localises to the cytoplasm. The protein localises to the cytosol. Functionally, involved in developmental cell fate decision. In Dictyostelium discoideum (Social amoeba), this protein is Serine/threonine-protein phosphatase 2A regulatory subunit psrA (psrA).